A 1406-amino-acid polypeptide reads, in one-letter code: DNA-directed RNA polymerase subunit beta' (1406 aa).

Cysteine 70, cysteine 72, cysteine 85, and cysteine 88 together coordinate Zn(2+). Residues aspartate 460, aspartate 462, and aspartate 464 each contribute to the Mg(2+) site. Zn(2+) is bound by residues cysteine 814, cysteine 888, cysteine 895, and cysteine 898.

This sequence belongs to the RNA polymerase beta' chain family. In terms of assembly, the RNAP catalytic core consists of 2 alpha, 1 beta, 1 beta' and 1 omega subunit. When a sigma factor is associated with the core the holoenzyme is formed, which can initiate transcription. It depends on Mg(2+) as a cofactor. Requires Zn(2+) as cofactor.

The catalysed reaction is RNA(n) + a ribonucleoside 5'-triphosphate = RNA(n+1) + diphosphate. In terms of biological role, DNA-dependent RNA polymerase catalyzes the transcription of DNA into RNA using the four ribonucleoside triphosphates as substrates. The protein is DNA-directed RNA polymerase subunit beta' of Sodalis glossinidius (strain morsitans).